Here is a 658-residue protein sequence, read N- to C-terminus: Translin-associated factor X-interacting protein 1 (658 aa).

Coiled coils occupy residues 144 to 184 and 230 to 295; these read EISL…AEEY and ALKM…LMQL.

In terms of assembly, interacts with TSNAX.

Its subcellular location is the cytoplasm. The protein resides in the perinuclear region. Functionally, possible role in spermatogenesis. This is Translin-associated factor X-interacting protein 1 from Homo sapiens (Human).